The following is a 221-amino-acid chain: Cytidylate kinase (221 aa).

11 to 19 (GPCGAGKST) is a binding site for ATP.

The protein belongs to the cytidylate kinase family. Type 1 subfamily.

The protein localises to the cytoplasm. It carries out the reaction CMP + ATP = CDP + ADP. The catalysed reaction is dCMP + ATP = dCDP + ADP. In Mycoplasmopsis agalactiae (strain NCTC 10123 / CIP 59.7 / PG2) (Mycoplasma agalactiae), this protein is Cytidylate kinase.